Consider the following 135-residue polypeptide: Agouti-signaling protein (135 aa).

The first 22 residues, 1 to 22, serve as a signal peptide directing secretion; the sequence is MNILRLLLATLLVCLCLLTAYS. An N-linked (GlcNAc...) asparagine glycan is attached at N39. Residues 56-101 are disordered; it reads NKKSKKISRKEAEKKRSSKKKASMKNVAQPRRPRPPPPAPCVATRD. Intrachain disulfides connect C96/C111, C103/C117, C110/C128, C114/C135, and C119/C126. Residues 96–135 enclose the Agouti domain; that stretch reads CVATRDSCKPPAPACCDPCASCQCRFFRSSCSCRVLNPTC.

It localises to the secreted. In terms of biological role, involved in the regulation of melanogenesis. The binding of ASP to MC1R precludes alpha-MSH initiated signaling and thus blocks production of cAMP, leading to a down-regulation of eumelanogenesis (brown/black pigment) and thus increasing synthesis of pheomelanin (yellow/red pigment). In Felis catus (Cat), this protein is Agouti-signaling protein (ASIP).